Consider the following 661-residue polypeptide: Arginine--tRNA ligase, cytoplasmic (661 aa).

At M1 the chain carries N-acetylmethionine. The segment at 1–73 (MDGLVAQCSA…AEKRRRPTKN (73 aa)) is could be involved in the assembly of the multisynthetase complex. L-arginine is bound by residues 201 to 203 (SPN), H212, Y385, D389, and Q413. The short motif at 202–213 (PNIAKEMHVGHL) is the 'HIGH' region element. Positions 530–544 (NTAAYLLYAFTRIRS) are interaction with tRNA.

It belongs to the class-I aminoacyl-tRNA synthetase family. Interacts (via N-terminus) with AIMP1 (via N-terminus); this stimulates its catalytic activity. Interacts (via N-terminus) with LARS2 (via C-terminus). Monomer. Part of a multisubunit complex that groups tRNA ligases for Arg (RARS1), Asp (DARS1), Gln (QARS1), Ile (IARS1), Leu (LARS1), Lys (KARS1), Met (MARS1) the bifunctional ligase for Glu and Pro (EPRS1) and the auxiliary subunits AIMP1/p43, AIMP2/p38 and EEF1E1/p18. Interacts with QARS1. Part of a complex composed of RARS1, QARS1 and AIMP1.

Its subcellular location is the cytoplasm. It localises to the cytosol. The catalysed reaction is tRNA(Arg) + L-arginine + ATP = L-arginyl-tRNA(Arg) + AMP + diphosphate. Its function is as follows. Forms part of a macromolecular complex that catalyzes the attachment of specific amino acids to cognate tRNAs during protein synthesis. Modulates the secretion of AIMP1 and may be involved in generation of the inflammatory cytokine EMAP2 from AIMP1. The chain is Arginine--tRNA ligase, cytoplasmic (RARS1) from Cricetulus griseus (Chinese hamster).